A 142-amino-acid chain; its full sequence is MLMPKRVKYRKQHRGRMKGNAKGGALVNFGEYGLKAMESHWITAQQIEACRIAITRTLKKTGKLWIRVFPDKSYTKHPAESKLGKGKGNVEGWVAVVKPGKILFEIGGVDEKLAREALEYAATKLPIRTKIVKRHEIGGEAV.

This sequence belongs to the universal ribosomal protein uL16 family. As to quaternary structure, part of the 50S ribosomal subunit.

Binds 23S rRNA and is also seen to make contacts with the A and possibly P site tRNAs. The protein is Large ribosomal subunit protein uL16 of Thermosipho africanus (strain TCF52B).